A 386-amino-acid chain; its full sequence is Outer membrane protein assembly factor BamB (386 aa).

An N-terminal signal peptide occupies residues 1-20; sequence MKKLFNQVLVAAGVLALLAG. Residue cysteine 21 is the site of N-palmitoyl cysteine attachment. Residue cysteine 21 is the site of S-diacylglycerol cysteine attachment.

Belongs to the BamB family. As to quaternary structure, part of the Bam complex.

The protein localises to the cell outer membrane. Part of the outer membrane protein assembly complex, which is involved in assembly and insertion of beta-barrel proteins into the outer membrane. The sequence is that of Outer membrane protein assembly factor BamB from Vibrio cholerae serotype O1 (strain ATCC 39315 / El Tor Inaba N16961).